The chain runs to 482 residues: Glutamyl-tRNA(Gln) amidotransferase subunit A (482 aa).

Active-site charge relay system residues include lysine 74 and serine 149. Serine 173 serves as the catalytic Acyl-ester intermediate.

The protein belongs to the amidase family. GatA subfamily. Heterotrimer of A, B and C subunits.

The catalysed reaction is L-glutamyl-tRNA(Gln) + L-glutamine + ATP + H2O = L-glutaminyl-tRNA(Gln) + L-glutamate + ADP + phosphate + H(+). In terms of biological role, allows the formation of correctly charged Gln-tRNA(Gln) through the transamidation of misacylated Glu-tRNA(Gln) in organisms which lack glutaminyl-tRNA synthetase. The reaction takes place in the presence of glutamine and ATP through an activated gamma-phospho-Glu-tRNA(Gln). In Prochlorococcus marinus (strain AS9601), this protein is Glutamyl-tRNA(Gln) amidotransferase subunit A.